Consider the following 499-residue polypeptide: C2H2-type transcription factor RPN4 (499 aa).

The disordered stretch occupies residues Q329–K397. Positions T331 to V344 are enriched in basic and acidic residues. Residues E345–A363 show a composition bias toward polar residues. The C2H2-type zinc-finger motif lies at F405–H436.

It localises to the nucleus. In terms of biological role, transcription factor that acts as a transcriptional activator of a number of genes encoding proteasomal subunits. Plays a role in ergosterol and plasma membrane homeostasis, and subsequent azole resistance. Regulates the expression of 212 genes, activating 80 genes and repressing, likely in an indirect fashion, 132 genes. Targets comprise several proteasome and ergosterol biosynthesis genes, including ERG1, ERG2, ERG3, and ERG11. Directly regulates ERG11 expression through the 3'-TTGCAAA-5' binding motif. In Candida glabrata (strain ATCC 2001 / BCRC 20586 / JCM 3761 / NBRC 0622 / NRRL Y-65 / CBS 138) (Yeast), this protein is C2H2-type transcription factor RPN4.